Consider the following 132-residue polypeptide: Actin-related protein 2/3 complex subunit 5A (132 aa).

Residue Ala2 is modified to N-acetylalanine.

The protein belongs to the ARPC5 family. Component of the Arp2/3 complex composed of ARP2, ARP3, ARPC1/p41-ARC, ARPC2/p34-ARC, ARPC3/p21-ARC, ARPC4/p20-ARC and ARPC5/p16-ARC. As to expression, expressed at low levels in all tissues with a relatively highest expression in inflorescences.

The protein localises to the cytoplasm. It is found in the cytoskeleton. It localises to the cell projection. Functionally, functions as a component of the Arp2/3 complex which is involved in regulation of actin polymerization and together with an activating nucleation-promoting factor (NPF) mediates the formation of branched actin networks. Arp2/3 complex plays a critical role in the control of cell morphogenesis via the modulation of cell polarity development. In Arabidopsis thaliana (Mouse-ear cress), this protein is Actin-related protein 2/3 complex subunit 5A (ARPC5A).